A 216-amino-acid chain; its full sequence is Ras-related protein Rab-2B (216 aa).

Residues Gly-16, Val-17, Gly-18, Lys-19, Ser-20, Cys-21, and Thr-38 each coordinate GTP. Ser-20 contributes to the Mg(2+) binding site. The Switch 1 signature appears at 37-42 (LTIGVE). Mg(2+)-binding residues include Thr-38 and Asp-61. The short motif at 63–72 (AGQESFRSIT) is the Switch 2 element. GTP contacts are provided by Gly-64, Asn-119, Lys-120, Asp-122, Ala-150, and Lys-151. Residues 189–207 (PQQSITSSVGPCSPQQNVS) show a composition bias toward polar residues. Residues 189–216 (PQQSITSSVGPCSPQQNVSDIGPDSGCC) form a disordered region. 2 S-geranylgeranyl cysteine lipidation sites follow: Cys-215 and Cys-216.

Belongs to the small GTPase superfamily. Rab family. Interacts (in GTP-bound form) with GARIN4 (via N-terminus). Interacts (in GTP-bound form) with GARIN5A. Interacts (in GTP-bound form) with GARIN1B. Interacts with VPS39 and VPS41. Mg(2+) is required as a cofactor.

Its subcellular location is the cell membrane. It localises to the endoplasmic reticulum membrane. The protein localises to the golgi apparatus membrane. The protein resides in the cytoplasmic vesicle. It is found in the secretory vesicle. Its subcellular location is the acrosome. It localises to the autophagosome membrane. The enzyme catalyses GTP + H2O = GDP + phosphate + H(+). Its activity is regulated as follows. Regulated by guanine nucleotide exchange factors (GEFs) which promote the exchange of bound GDP for free GTP, GTPase activating proteins (GAPs) which increase the GTP hydrolysis activity, and GDP dissociation inhibitors (GDIs) which inhibit the dissociation of the nucleotide from the GTPase. Its function is as follows. The small GTPases Rab are key regulators of intracellular membrane trafficking, from the formation of transport vesicles to their fusion with membranes. Rabs cycle between active GTP-bound and inactive GDP-bound states. In their active state, drive transport of vesicular carriers from donor organelles to acceptor organelles to regulate the membrane traffic that maintains organelle identity and morphology. Regulates the compacted morphology of the Golgi. Promotes cytosolic DNA-induced innate immune responses. Regulates IFN responses against DNA viruses by regulating the CGAS-STING signaling axis. Together with RAB2A redundantly required for efficient autophagic flux. This chain is Ras-related protein Rab-2B (Rab2b), found in Mus musculus (Mouse).